Consider the following 354-residue polypeptide: Peptide chain release factor 1 (354 aa).

Position 230 is an N5-methylglutamine (Gln230).

Belongs to the prokaryotic/mitochondrial release factor family. Post-translationally, methylated by PrmC. Methylation increases the termination efficiency of RF1.

Its subcellular location is the cytoplasm. Its function is as follows. Peptide chain release factor 1 directs the termination of translation in response to the peptide chain termination codons UAG and UAA. The chain is Peptide chain release factor 1 from Rhodospirillum rubrum (strain ATCC 11170 / ATH 1.1.1 / DSM 467 / LMG 4362 / NCIMB 8255 / S1).